Here is a 467-residue protein sequence, read N- to C-terminus: Abscisic acid 8'-hydroxylase 1 (467 aa).

Residues alanine 5–isoleucine 24 traverse the membrane as a helical segment. Cysteine 411 provides a ligand contact to heme.

Belongs to the cytochrome P450 family. Requires heme as cofactor. In terms of tissue distribution, mainly expressed in flowers, siliques, roots and stems. Lower expression in rosette leaves and dry seeds. Expressed in vascular tissues of embryo during the seed development.

The protein resides in the membrane. It catalyses the reaction 2-cis-(+)-abscisate + reduced [NADPH--hemoprotein reductase] + O2 = (+)-8'-hydroxyabscisate + oxidized [NADPH--hemoprotein reductase] + H2O + H(+). It participates in plant hormone degradation; abscisic acid degradation. Its function is as follows. Involved in the oxidative degradation of abscisic acid. Plays an important role in determining abscisic acid levels in dry seeds and in the control of postgermination growth. The sequence is that of Abscisic acid 8'-hydroxylase 1 (CYP707A1) from Arabidopsis thaliana (Mouse-ear cress).